A 524-amino-acid chain; its full sequence is Bifunctional purine biosynthesis protein PurH (524 aa).

The MGS-like domain occupies 1–145; sequence MIKQALLSVS…KNHRDVTVIV (145 aa).

It belongs to the PurH family.

The catalysed reaction is (6R)-10-formyltetrahydrofolate + 5-amino-1-(5-phospho-beta-D-ribosyl)imidazole-4-carboxamide = 5-formamido-1-(5-phospho-D-ribosyl)imidazole-4-carboxamide + (6S)-5,6,7,8-tetrahydrofolate. The enzyme catalyses IMP + H2O = 5-formamido-1-(5-phospho-D-ribosyl)imidazole-4-carboxamide. It participates in purine metabolism; IMP biosynthesis via de novo pathway; 5-formamido-1-(5-phospho-D-ribosyl)imidazole-4-carboxamide from 5-amino-1-(5-phospho-D-ribosyl)imidazole-4-carboxamide (10-formyl THF route): step 1/1. It functions in the pathway purine metabolism; IMP biosynthesis via de novo pathway; IMP from 5-formamido-1-(5-phospho-D-ribosyl)imidazole-4-carboxamide: step 1/1. The sequence is that of Bifunctional purine biosynthesis protein PurH from Cupriavidus taiwanensis (strain DSM 17343 / BCRC 17206 / CCUG 44338 / CIP 107171 / LMG 19424 / R1) (Ralstonia taiwanensis (strain LMG 19424)).